A 426-amino-acid chain; its full sequence is Glutamate-1-semialdehyde 2,1-aminomutase (426 aa).

K265 carries the post-translational modification N6-(pyridoxal phosphate)lysine.

Belongs to the class-III pyridoxal-phosphate-dependent aminotransferase family. HemL subfamily. In terms of assembly, homodimer. The cofactor is pyridoxal 5'-phosphate.

It is found in the cytoplasm. It catalyses the reaction (S)-4-amino-5-oxopentanoate = 5-aminolevulinate. It participates in porphyrin-containing compound metabolism; protoporphyrin-IX biosynthesis; 5-aminolevulinate from L-glutamyl-tRNA(Glu): step 2/2. The sequence is that of Glutamate-1-semialdehyde 2,1-aminomutase from Alcanivorax borkumensis (strain ATCC 700651 / DSM 11573 / NCIMB 13689 / SK2).